A 246-amino-acid polypeptide reads, in one-letter code: MRYKAVVEYEGTSFIGWQRQHGVVGKSVQESIERSIKEFCQQSVIVYAAGRTDAGVHATGQVVHFDLKVSREDYVIKNALNHYLRNEKVSILQLERVDEEFHARFSAKKRHYTYKISNREAPLCIDLMRMWHVPKRLNVENMREAASYIVGKHDFASFRAKDCQSKSSIKTVDSIDIIAAEEEININISAQSFLHKQVRITVGTFVECGMGLYPPAHVLEILEKKDRAAAGITAPAHGLYLTRVDY.

Aspartate 53 (nucleophile) is an active-site residue. A substrate-binding site is contributed by tyrosine 112.

Belongs to the tRNA pseudouridine synthase TruA family. As to quaternary structure, homodimer.

The enzyme catalyses uridine(38/39/40) in tRNA = pseudouridine(38/39/40) in tRNA. Its function is as follows. Formation of pseudouridine at positions 38, 39 and 40 in the anticodon stem and loop of transfer RNAs. This Anaplasma phagocytophilum (strain HZ) protein is tRNA pseudouridine synthase A.